We begin with the raw amino-acid sequence, 252 residues long: NAC domain-containing protein 23 (252 aa).

One can recognise an NAC domain in the interval 12-177 (MPPGFRFQPT…EMVLCRISNK (166 aa)). Residues 110–183 (TAVKRRFVFY…ISNKDLPKPP (74 aa)) mediate DNA binding. A disordered region spans residues 225-252 (VDDAAAADDDPGDLDEEIDDSMQRNHGG). Residues 229–244 (AAADDDPGDLDEEIDD) are compositionally biased toward acidic residues.

As to quaternary structure, forms heterodimers with NAC26. Expressed in stems and panicles. Expressed in developing seeds.

The protein localises to the nucleus. Its subcellular location is the cytoplasm. Transcription factor involved in the regulation of seed size. Possesses transactivation activity in yeast. This is NAC domain-containing protein 23 from Oryza sativa subsp. indica (Rice).